We begin with the raw amino-acid sequence, 364 residues long: Protein LATERAL BRANCHING OXIDOREDUCTASE 1 (364 aa).

A Fe2OG dioxygenase domain is found at 203 to 312; that stretch reads RFEEMFGEAV…RLTIVTFYAP (110 aa). The Fe cation site is built by H235, D237, and H293. Residue R303 coordinates 2-oxoglutarate.

The protein belongs to the iron/ascorbate-dependent oxidoreductase family. In terms of assembly, monomer. It depends on Fe(2+) as a cofactor. L-ascorbate is required as a cofactor. As to expression, expressed in the vasculature throughout the plant and in the buds and root tips.

It is found in the cytoplasm. It catalyses the reaction (11R)-methyl carlactonoate + 2-oxoglutarate + O2 = (11R)-hydroxymethyl carlactonoate + succinate + CO2. Oxoglutarate-dependent dioxygenase involved in the biosynthesis of strigolactone natural products, bioactive compounds promoting plant fitness and soil microbe interactions, but preventing shoot branching. Catalyzes the hydroxylation of (11R)-methyl carlactonoate (MeCLA) to produce (11R)-hydroxymethyl carlactonoate (1'-HO-MeCLA) in final stages of strigolactone biosynthesis, downstream of MAX1 and CLAMT. This is Protein LATERAL BRANCHING OXIDOREDUCTASE 1 from Arabidopsis thaliana (Mouse-ear cress).